Consider the following 571-residue polypeptide: Decapping 5-like protein (571 aa).

Residues 1 to 17 (MASESSQSSSPSSSQPP) are compositionally biased toward low complexity. 4 disordered regions span residues 1–27 (MASE…SPGN), 102–141 (LQVN…ISGY), 159–187 (LSSK…GSLT), and 258–305 (SQVV…SEAQ). Residues 25–108 (PGNNVGDTFI…IKDLQVNPSP (84 aa)) enclose the Sm domain. 2 stretches are compositionally biased toward polar residues: residues 104–138 (VNPS…SSPI) and 167–187 (TQHS…GSLT). Over residues 264–279 (SPDVSSNQSYSSNPSP) the composition is skewed to low complexity. Residues 293 to 305 (SVSSNLSPPSEAQ) are compositionally biased toward polar residues. The DFDF domain occupies 419–455 (RIPSSSIEYTEEFDFEAMNEKFKKSELWGYLGRNNQR). The short motif at 474-489 (PAYNKDDFFDTISCNQ) is the FFD box element. A TFG box motif is present at residues 498–518 (QQHNQFPEHMRQVPEAFGNNF).

This sequence belongs to the LSM14 family. As to quaternary structure, homodimer. Component of the decapping complex.

The protein resides in the cytoplasm. It localises to the P-body. Its function is as follows. As a component of the decapping complex, involved in the degradation of mRNAs. Promotes P-body formation. Translational repressor. In Arabidopsis thaliana (Mouse-ear cress), this protein is Decapping 5-like protein (DCP5-L).